The chain runs to 548 residues: Eukaryotic translation initiation factor 3 subunit D (548 aa).

Lys53 is subject to N6-acetyllysine. A Phosphoserine modification is found at Ser161. The RNA gate stretch occupies residues 285–299 (DFDLLTVSETANEPP). Residues 523–548 (PDGTFSSDEDEEEEEEEEEEEEEEET) form a disordered region. Residues Ser528 and Ser529 each carry the phosphoserine modification. Residues 529–548 (SDEDEEEEEEEEEEEEEEET) are compositionally biased toward acidic residues.

Belongs to the eIF-3 subunit D family. In terms of assembly, component of the eukaryotic translation initiation factor 3 (eIF-3) complex, which is composed of 13 subunits: EIF3A, EIF3B, EIF3C, EIF3D, EIF3E, EIF3F, EIF3G, EIF3H, EIF3I, EIF3J, EIF3K, EIF3L and EIF3M. The eIF-3 complex appears to include 3 stable modules: module A is composed of EIF3A, EIF3B, EIF3G and EIF3I; module B is composed of EIF3F, EIF3H, and EIF3M; and module C is composed of EIF3C, EIF3D, EIF3E, EIF3K and EIF3L. EIF3C of module C binds EIF3B of module A and EIF3H of module B, thereby linking the three modules. EIF3J is a labile subunit that binds to the eIF-3 complex via EIF3B. The eIF-3 complex interacts with RPS6KB1 under conditions of nutrient depletion. Mitogenic stimulation leads to binding and activation of a complex composed of MTOR and RPTOR, leading to phosphorylation and release of RPS6KB1 and binding of EIF4B to eIF-3.

The protein resides in the cytoplasm. In terms of biological role, mRNA cap-binding component of the eukaryotic translation initiation factor 3 (eIF-3) complex, a complex required for several steps in the initiation of protein synthesis of a specialized repertoire of mRNAs. The eIF-3 complex associates with the 40S ribosome and facilitates the recruitment of eIF-1, eIF-1A, eIF-2:GTP:methionyl-tRNAi and eIF-5 to form the 43S pre-initiation complex (43S PIC). The eIF-3 complex stimulates mRNA recruitment to the 43S PIC and scanning of the mRNA for AUG recognition. The eIF-3 complex is also required for disassembly and recycling of post-termination ribosomal complexes and subsequently prevents premature joining of the 40S and 60S ribosomal subunits prior to initiation. The eIF-3 complex specifically targets and initiates translation of a subset of mRNAs involved in cell proliferation, including cell cycling, differentiation and apoptosis, and uses different modes of RNA stem-loop binding to exert either translational activation or repression. In the eIF-3 complex, EIF3D specifically recognizes and binds the 7-methylguanosine cap of a subset of mRNAs. In Macaca fascicularis (Crab-eating macaque), this protein is Eukaryotic translation initiation factor 3 subunit D.